The primary structure comprises 503 residues: 26S proteasome non-ATPase regulatory subunit 5 (503 aa).

An N-acetylalanine modification is found at Ala-2.

The protein belongs to the proteasome subunit S5B/HSM3 family. In terms of assembly, interacts with PSMC1, PSMC2, PSMD1 and PSMD6. Part of transient complex containing PSMD5, PSMC2, PSMC1 and PSMD2 formed during the assembly of the 26S proteasome.

In terms of biological role, acts as a chaperone during the assembly of the 26S proteasome, specifically of the base subcomplex of the PA700/19S regulatory complex (RC). In the initial step of the base subcomplex assembly is part of an intermediate PSMD5:PSMC2:PSMC1:PSMD2 module which probably assembles with a PSMD10:PSMC4:PSMC5:PAAF1 module followed by dissociation of PSMD5. The polypeptide is 26S proteasome non-ATPase regulatory subunit 5 (PSMD5) (Bos taurus (Bovine)).